A 363-amino-acid chain; its full sequence is Small ribosomal subunit biogenesis GTPase RsgA (363 aa).

One can recognise a CP-type G domain in the interval His112–Leu268. GTP is bound by residues Thr157–Asp160 and Gly210–Thr218. Zn(2+) is bound by residues Cys291, Cys296, His298, and Cys304. Residues Arg340–Arg363 are disordered.

This sequence belongs to the TRAFAC class YlqF/YawG GTPase family. RsgA subfamily. As to quaternary structure, monomer. Associates with 30S ribosomal subunit, binds 16S rRNA. Requires Zn(2+) as cofactor.

The protein localises to the cytoplasm. In terms of biological role, one of several proteins that assist in the late maturation steps of the functional core of the 30S ribosomal subunit. Helps release RbfA from mature subunits. May play a role in the assembly of ribosomal proteins into the subunit. Circularly permuted GTPase that catalyzes slow GTP hydrolysis, GTPase activity is stimulated by the 30S ribosomal subunit. The polypeptide is Small ribosomal subunit biogenesis GTPase RsgA (Xanthomonas oryzae pv. oryzae (strain MAFF 311018)).